A 328-amino-acid chain; its full sequence is MTGSNEFKLNQPPEDGISSVKFSPNTSQFLLVSSWDTSVRLYDVPANSMRLKYQHTGAVLDCAFYDPTHAWSGGLDHQLKMHDLNTDQENLVGTHDAPIRCVEYCPEVNVMVTGSWDQTVKLWDPRTPCNAGTFSQPEKVYTLSVSGDRLIVGTAGRRVLVWDLRNMGYVQQRRESSLKYQTRCIRAFPNKQGYVLSSIEGRVAVEYLDPSPEVQKKKYAFKCHRLKENNIEQIYPVNAISFHNIHNTFATGGSDGFVNIWDPFNKKRLCQFHRYPTSIASLAFSNDGTTLAIASSYMYEMDDTEHPEDGIFIRQVTDAETKPKSPCT.

WD repeat units follow at residues 4 to 44 (SNEF…LYDV), 47 to 84 (NSMR…MHDL), 87 to 125 (DQEN…LWDP), 129 to 164 (CNAG…VWDL), and 170 to 210 (VQQR…YLDP). N6-acetyllysine is present on Lys-179. At Ser-211 the chain carries Phosphoserine. Lys-216 participates in a covalent cross-link: Glycyl lysine isopeptide (Lys-Gly) (interchain with G-Cter in ubiquitin). WD repeat units lie at residues 217 to 263 (KKYA…IWDP) and 267 to 316 (KRLC…IRQV).

This sequence belongs to the WD repeat BUB3 family. As to quaternary structure, interacts with BUB1 and BUBR1. The BUB1/BUB3 complex interacts with MAD1L1. Interacts with ZNF207/BuGZ; leading to promote stability and kinetochore loading of BUB3. Poly-ADP-ribosylated by PARP1. Post-translationally, ubiquitinated by UBR5, promoting disassembly of the mitotic checkpoint complex from the APC/C complex.

It is found in the nucleus. The protein localises to the chromosome. It localises to the centromere. Its subcellular location is the kinetochore. Has a dual function in spindle-assembly checkpoint signaling and in promoting the establishment of correct kinetochore-microtubule (K-MT) attachments. Promotes the formation of stable end-on bipolar attachments. Necessary for kinetochore localization of BUB1. Regulates chromosome segregation during oocyte meiosis. The BUB1/BUB3 complex plays a role in the inhibition of anaphase-promoting complex or cyclosome (APC/C) when spindle-assembly checkpoint is activated and inhibits the ubiquitin ligase activity of APC/C by phosphorylating its activator CDC20. This complex can also phosphorylate MAD1L1. This Homo sapiens (Human) protein is Mitotic checkpoint protein BUB3 (BUB3).